The primary structure comprises 54 residues: Large ribosomal subunit protein eL37 (54 aa).

Zn(2+)-binding residues include Cys20, Cys23, Cys35, and Cys38. Residues 20 to 38 (CRRCGHHTYNVRTKRCSHC) form a C4-type zinc finger.

Belongs to the eukaryotic ribosomal protein eL37 family. The cofactor is Zn(2+).

In terms of biological role, binds to the 23S rRNA. This Thermoplasma volcanium (strain ATCC 51530 / DSM 4299 / JCM 9571 / NBRC 15438 / GSS1) protein is Large ribosomal subunit protein eL37 (rpl37e).